A 561-amino-acid chain; its full sequence is uncharacterized protein (561 aa).

Helical transmembrane passes span 27–49 (ILEFLAAQPLLTLALILAVGLLI), 54–71 (FFGISLGAAAVLFVALAL), 83–105 (LVYQLGLAMFVYAIGLSAGSEFF), 115–137 (LTLFMIGLLMLMMAVAYGIIKLF), 142–162 (IIGAGMFAGALSSTPGMAAMV), and 177–199 (VVGYSLAYPGAVIGSILVAAIGA). An RCK C-terminal domain is found at 292 to 373 (QQDVPIEDTD…MSEVRRFLGD (82 aa)). Helical transmembrane passes span 383-405 (LMPFAFGLVIGLAIGVIPIPLPG), 409-428 (LSLGFGGGPIVAGLILGALN), 441-463 (ASRTISTFGLAIFLAGVGTSAGV), and 478-500 (IAGGFIVTISSALVCALVCMPLF).

Belongs to the AAE transporter (TC 2.A.81) family.

The protein localises to the cell membrane. This is an uncharacterized protein from Corynebacterium diphtheriae (strain ATCC 700971 / NCTC 13129 / Biotype gravis).